The primary structure comprises 434 residues: Protein FAM83A (434 aa).

Residues 1-298 (MSRSRHLGKI…LYASSKPVMG (298 aa)) form a DUF1669 region. The disordered stretch occupies residues 76-97 (REPPCPPDTLGGAEAGPKGLDS). A phosphoserine mark is found at Ser301, Ser327, Ser348, and Ser357. A disordered region spans residues 308-399 (VPPGAAPANG…HDGPPAAVYS (92 aa)). Low complexity-rich tracts occupy residues 320 to 332 (SSSSGSASDRTSS) and 348 to 357 (SVSASSGPCS). Residues 358–369 (PAAPHPPPPPRF) are compositionally biased toward pro residues.

This sequence belongs to the FAM83 family. As to quaternary structure, directly interacts (via DUF1669) with casein kinase isoforms CSNK1A1, CSNK1A1L, CSNK1D and CSNK1E. Phosphorylated upon EGFR activation in a breast cancer cell line.

Its subcellular location is the cytoplasm. Functionally, involved in mitochondrial maintenance during adipogenesis. May be acting by playing a role in the maintenance of normal mitochondrial function. The chain is Protein FAM83A from Homo sapiens (Human).